Reading from the N-terminus, the 930-residue chain is Pyruvate dehydrogenase E1 component (930 aa).

Over residues 1–10 (MTTDFARHDL) the composition is skewed to basic and acidic residues. The segment at 1 to 21 (MTTDFARHDLAQNSNSASEPD) is disordered. Lys375 participates in a covalent cross-link: Isoglutamyl lysine isopeptide (Lys-Gln) (interchain with Q-Cter in protein Pup).

As to quaternary structure, homodimer. Part of the PDH complex, consisting of multiple copies of AceE (E1), DlaT (E2) and Lpd (E3). Requires Mg(2+) as cofactor. Thiamine diphosphate is required as a cofactor.

The enzyme catalyses N(6)-[(R)-lipoyl]-L-lysyl-[protein] + pyruvate + H(+) = N(6)-[(R)-S(8)-acetyldihydrolipoyl]-L-lysyl-[protein] + CO2. Its function is as follows. Component of the pyruvate dehydrogenase (PDH) complex, that catalyzes the overall conversion of pyruvate to acetyl-CoA and CO(2). AceE has reductase activity with pyruvate but does not react with 2-oxoglutarate. The chain is Pyruvate dehydrogenase E1 component (aceE) from Mycobacterium tuberculosis (strain ATCC 25618 / H37Rv).